Consider the following 255-residue polypeptide: Snake venom serine protease HS112 (255 aa).

An N-terminal signal peptide occupies residues 1–18 (MVLIRVIANLLILQLSYA). Positions 19–24 (QKSSEL) are excised as a propeptide. The Peptidase S1 domain occupies 25–246 (VIGGDECDIN…YLPWIQSIIA (222 aa)). 6 disulfides stabilise this stretch: Cys-31–Cys-162, Cys-49–Cys-65, Cys-97–Cys-253, Cys-141–Cys-207, Cys-173–Cys-186, and Cys-197–Cys-222. Residues His-64 and Asp-109 each act as charge relay system in the active site. N-linked (GlcNAc...) asparagine glycosylation occurs at Asn-169. Residue Ser-201 is the Charge relay system of the active site. N-linked (GlcNAc...) asparagine glycosylation occurs at Asn-248.

It belongs to the peptidase S1 family. Snake venom subfamily. In terms of assembly, monomer. In terms of tissue distribution, expressed by the venom gland.

The protein resides in the secreted. Its function is as follows. Snake venom serine protease that may act in the hemostasis system of the prey. The polypeptide is Snake venom serine protease HS112 (Bothrops jararaca (Jararaca)).